Here is a 130-residue protein sequence, read N- to C-terminus: Small ribosomal subunit protein uS8 (130 aa).

This sequence belongs to the universal ribosomal protein uS8 family. As to quaternary structure, part of the 30S ribosomal subunit. Contacts proteins S5 and S12.

Functionally, one of the primary rRNA binding proteins, it binds directly to 16S rRNA central domain where it helps coordinate assembly of the platform of the 30S subunit. This chain is Small ribosomal subunit protein uS8, found in Vibrio vulnificus (strain CMCP6).